The chain runs to 101 residues: MIPGEVIPKAGEIELNAGAPQVVLEVSNTGDRPIQVGSHYHFYETNGALSFDREKARGMRLDIAAGTAVRFEPGQAREVRLVPLSGARKVFGFQQKIMGDL.

The protein belongs to the urease beta subunit family. Heterotrimer of UreA (gamma), UreB (beta) and UreC (alpha) subunits. Three heterotrimers associate to form the active enzyme.

It is found in the cytoplasm. It catalyses the reaction urea + 2 H2O + H(+) = hydrogencarbonate + 2 NH4(+). The protein operates within nitrogen metabolism; urea degradation; CO(2) and NH(3) from urea (urease route): step 1/1. This chain is Urease subunit beta, found in Chelativorans sp. (strain BNC1).